Here is a 360-residue protein sequence, read N- to C-terminus: Tyrosine-protein phosphatase non-receptor type 7 (360 aa).

The tract at residues 1–37 (MVQAHGGRSRAQPLTLSLGAAMTQPPPEKTPAKKHVR) is disordered. The interaction with MAP kinases stretch occupies residues 38–51 (LQERRGSNVALMLD). Position 44 is a phosphoserine (serine 44). Phosphothreonine is present on threonine 66. Phosphoserine is present on residues serine 93, serine 110, and serine 143. The 254-residue stretch at 97–350 (LEEEFLKIPS…QFLHHTLALY (254 aa)) folds into the Tyrosine-protein phosphatase domain. Residues aspartate 257, 291–297 (CSAGIGR), and glutamine 335 contribute to the substrate site. Cysteine 291 (phosphocysteine intermediate) is an active-site residue. Cysteine 291 bears the Cysteine sulfenic acid (-SOH) mark.

Belongs to the protein-tyrosine phosphatase family. Non-receptor class subfamily. Monomer. Interacts with MAPK1, MAPK3 and several other MAP kinases. Post-translationally, phosphorylated on serine residues in resting T-cells. Phosphorylation increases upon exposure to stimuli that increase intracellular cAMP levels. Phosphorylation leads to dissociation of bound MAP kinases. In terms of processing, oxidized at active site cysteine. Treatment with pervanadate (vanadate and H(2)O(2)) or with antigen enhanced oxidation of active site cysteine. In terms of tissue distribution, expressed exclusively in thymus and spleen.

The protein resides in the cytoplasm. It localises to the cytoskeleton. The catalysed reaction is O-phospho-L-tyrosyl-[protein] + H2O = L-tyrosyl-[protein] + phosphate. Inhibited in cells after FCER1A triggering. Functionally, protein phosphatase that acts preferentially on tyrosine-phosphorylated MAPK1. Plays a role in the regulation of T and B-lymphocyte development and signal transduction. The sequence is that of Tyrosine-protein phosphatase non-receptor type 7 (PTPN7) from Homo sapiens (Human).